Reading from the N-terminus, the 297-residue chain is Glycerol-3-phosphate dehydrogenase [NAD(P)+] (297 aa).

The NADPH site is built by W11, R33, and K79. K79, G107, and S109 together coordinate sn-glycerol 3-phosphate. A111 contributes to the NADPH binding site. The sn-glycerol 3-phosphate site is built by K161, D214, S224, R225, and N226. K161 (proton acceptor) is an active-site residue. Position 225 (R225) interacts with NADPH. NADPH contacts are provided by V249 and E251.

This sequence belongs to the NAD-dependent glycerol-3-phosphate dehydrogenase family.

Its subcellular location is the cytoplasm. It carries out the reaction sn-glycerol 3-phosphate + NAD(+) = dihydroxyacetone phosphate + NADH + H(+). The enzyme catalyses sn-glycerol 3-phosphate + NADP(+) = dihydroxyacetone phosphate + NADPH + H(+). Its pathway is membrane lipid metabolism; glycerophospholipid metabolism. Its function is as follows. Catalyzes the reduction of the glycolytic intermediate dihydroxyacetone phosphate (DHAP) to sn-glycerol 3-phosphate (G3P), the key precursor for phospholipid synthesis. The polypeptide is Glycerol-3-phosphate dehydrogenase [NAD(P)+] (Campylobacter jejuni subsp. jejuni serotype O:23/36 (strain 81-176)).